A 317-amino-acid polypeptide reads, in one-letter code: Melanocyte-stimulating hormone receptor (317 aa).

At 1–37 the chain is on the extracellular side; sequence MPVLGSQRRLLGSLNCTPPATFSLTLAPNRTGPQCLE. The N-linked (GlcNAc...) asparagine glycan is linked to asparagine 29. The helical transmembrane segment at 38–63 threads the bilayer; the sequence is VSIPDGLFLSLGLVSLVENVLVVAAI. The Cytoplasmic portion of the chain corresponds to 64–72; it reads AKNRNLHSP. The helical transmembrane segment at 73 to 93 threads the bilayer; the sequence is MYYFICCLAVSDLLVSVSNVL. At 94–118 the chain is on the extracellular side; sequence ETAVMLLLEAGALAARAAVVQQLDN. A helical transmembrane segment spans residues 119 to 140; it reads VIDVLICGSMVSSLCFLGAIAM. Residues 141–163 lie on the Cytoplasmic side of the membrane; that stretch reads DRYISIFYALRYHSVVTLPRAWR. A helical transmembrane segment spans residues 164-183; it reads IIAAIWVASILTSLLFITYY. Residues 184–191 lie on the Extracellular side of the membrane; that stretch reads NHTVVLLC. The chain crosses the membrane as a helical span at residues 192-211; sequence LVGFFIAMLALMAILYVHML. Over 212–240 the chain is Cytoplasmic; it reads ARACQHARDIARLQKRQHPIHQGFGLKGA. A helical membrane pass occupies residues 241 to 266; that stretch reads ATLTILLGVFFLCWGPFFLHLSLIVL. Over 267–279 the chain is Extracellular; it reads CPQHPTCGCIFKN. Residues 280–300 form a helical membrane-spanning segment; it reads FNLFLALIICNAIVDPLIYAF. Over 301–317 the chain is Cytoplasmic; it reads RSQELRKTLQEVLQCSW. Cysteine 315 carries S-palmitoyl cysteine lipidation.

The protein belongs to the G-protein coupled receptor 1 family. In terms of assembly, interacts with MGRN1, but does not undergo MGRN1-mediated ubiquitination; this interaction competes with GNAS-binding and thus inhibits agonist-induced cAMP production. Interacts with OPN3; the interaction results in a decrease in MC1R-mediated cAMP signaling and ultimately a decrease in melanin production in melanocytes.

The protein resides in the cell membrane. Functionally, receptor for MSH (alpha, beta and gamma) and ACTH. The activity of this receptor is mediated by G proteins which activate adenylate cyclase. Mediates melanogenesis, the production of eumelanin (black/brown) and phaeomelanin (red/yellow), via regulation of cAMP signaling in melanocytes. The chain is Melanocyte-stimulating hormone receptor (MC1R) from Alces alces alces (European moose).